A 260-amino-acid chain; its full sequence is MEATSTAATSDKQRSSIHALPVLQDNIIWIWIKGDQAVVVDPAIAEPVKTWLQTRKLSLAAVLQTHHHADHIGGTLELLRDWPNAAVVAAADDRDRIPFQTISVRDRDKISLLNSSVEVLAVAGHTRAHIAYYLPTNKEDREDPAVFCGDTLFGAGCGRLFEGTAEDMFKALQRLCCLPAKTRVYCAHEYTEANLRWASALHPEDIAISERLVDVSSRRQRGALSLPSSISEEQRTNLFVRAQNSKELAELRQHKDQWRN.

The Zn(2+) site is built by histidine 66, histidine 68, aspartate 70, histidine 71, histidine 125, aspartate 150, and histidine 188.

It belongs to the metallo-beta-lactamase superfamily. Glyoxalase II family. Monomer. Zn(2+) is required as a cofactor.

It catalyses the reaction an S-(2-hydroxyacyl)glutathione + H2O = a 2-hydroxy carboxylate + glutathione + H(+). It functions in the pathway secondary metabolite metabolism; methylglyoxal degradation; (R)-lactate from methylglyoxal: step 2/2. Its function is as follows. Thiolesterase that catalyzes the hydrolysis of S-D-lactoyl-glutathione to form glutathione and D-lactic acid. This is Hydroxyacylglutathione hydrolase from Prochlorococcus marinus (strain MIT 9303).